A 98-amino-acid chain; its full sequence is uncharacterized protein (98 aa).

A compositionally biased stretch (basic residues) spans 1-10 (MARRRKPLHR). The interval 1-21 (MARRRKPLHRQRPEPPSWALR) is disordered.

This is an uncharacterized protein from Mycobacterium bovis (strain ATCC BAA-935 / AF2122/97).